A 417-amino-acid polypeptide reads, in one-letter code: Serine hydroxymethyltransferase (417 aa).

(6S)-5,6,7,8-tetrahydrofolate is bound by residues Leu121 and 125–127 (GHL). The residue at position 230 (Lys230) is an N6-(pyridoxal phosphate)lysine. 355-357 (SPF) serves as a coordination point for (6S)-5,6,7,8-tetrahydrofolate.

Belongs to the SHMT family. As to quaternary structure, homodimer. The cofactor is pyridoxal 5'-phosphate.

It is found in the cytoplasm. It carries out the reaction (6R)-5,10-methylene-5,6,7,8-tetrahydrofolate + glycine + H2O = (6S)-5,6,7,8-tetrahydrofolate + L-serine. It participates in one-carbon metabolism; tetrahydrofolate interconversion. Its pathway is amino-acid biosynthesis; glycine biosynthesis; glycine from L-serine: step 1/1. Its function is as follows. Catalyzes the reversible interconversion of serine and glycine with tetrahydrofolate (THF) serving as the one-carbon carrier. This reaction serves as the major source of one-carbon groups required for the biosynthesis of purines, thymidylate, methionine, and other important biomolecules. Also exhibits THF-independent aldolase activity toward beta-hydroxyamino acids, producing glycine and aldehydes, via a retro-aldol mechanism. The chain is Serine hydroxymethyltransferase from Legionella pneumophila (strain Corby).